The chain runs to 395 residues: Guanine nucleotide-binding protein subunit beta-5 (395 aa).

7 WD repeats span residues 103 to 142 (GHGNKVLCMDWCKDKRRIVSSSQDGKVIVWDSFTTNKEHA), 145 to 184 (MPCTWVMACAYAPSGCAIACGGLDNKCSVYPLTFDKNENM), 193 to 234 (MHTN…QSFH), 236 to 278 (HGAD…QAFE), 279 to 318 (THESDVNSVRYYPSGDAFASGSDDATCRLYDLRADREVAI), 320 to 362 (SKES…RVSI), and 365 to 394 (GHENRVSTLRVSPDGTAFCSGSWDHTLRVW).

The protein belongs to the WD repeat G protein beta family. In terms of assembly, component of a complex composed of RGS9 (isoform RGS9-1), GNB5 and RGS9BP; within this complex, the presence of GNB5 stabilizes both itself and RGS9 and increases RGS9 GTPase-activating protein (GAP) activity. Interacts with RGS7, forming the RGS7-GNB5 complex; within this complex, the presence of GNB5 increases RGS7 GTPase-activating protein (GAP) activity. Interacts with GPR158; promotes the GTPase activator activity of the RGS7-GNB5 complex in absence of glycine, in contrast GTPase activator activity of the RGS7-GNB5 complex is inhibited in presence of glycine. Interacts with RGS6. Isoform 1 is only detected in retina. Isoform 2 is detected in brain (at protein level). Isoform 2 is detected in brain.

It is found in the membrane. Enhances GTPase-activating protein (GAP) activity of regulator of G protein signaling (RGS) proteins, such as RGS7 and RGS9, hence involved in the termination of the signaling initiated by the G protein coupled receptors (GPCRs) by accelerating the GTP hydrolysis on the G-alpha subunits, thereby promoting their inactivation. Increases RGS7 GTPase-activating protein (GAP) activity, thereby regulating mood and cognition. Increases RGS9 GTPase-activating protein (GAP) activity, hence contributes to the deactivation of G protein signaling initiated by D(2) dopamine receptors. May play an important role in neuronal signaling, including in the parasympathetic, but not sympathetic, control of heart rate. This chain is Guanine nucleotide-binding protein subunit beta-5 (Gnb5), found in Mus musculus (Mouse).